The following is a 330-amino-acid chain: Uroporphyrinogen decarboxylase (330 aa).

Substrate-binding positions include 10-14, F29, S59, D60, Y137, S192, and H307; that span reads RQAGR.

The protein belongs to the uroporphyrinogen decarboxylase family. As to quaternary structure, homodimer.

It localises to the plastid. It is found in the chloroplast. It carries out the reaction uroporphyrinogen III + 4 H(+) = coproporphyrinogen III + 4 CO2. It participates in porphyrin-containing compound metabolism; protoporphyrin-IX biosynthesis; coproporphyrinogen-III from 5-aminolevulinate: step 4/4. Functionally, catalyzes the decarboxylation of four acetate groups of uroporphyrinogen-III to yield coproporphyrinogen-III. This chain is Uroporphyrinogen decarboxylase (DCUP), found in Hordeum vulgare (Barley).